The sequence spans 728 residues: Catalase-peroxidase 1 (728 aa).

Positions 91 to 218 (WHSAGTYRTA…LAAVQMGLIY (128 aa)) form a cross-link, tryptophyl-tyrosyl-methioninium (Trp-Tyr) (with M-244). Catalysis depends on His-92, which acts as the Proton acceptor. A cross-link (tryptophyl-tyrosyl-methioninium (Tyr-Met) (with W-91)) is located at residues 218–244 (YVNPEGPDGNPDPVAAAHDIRETFARM). His-259 provides a ligand contact to heme b.

This sequence belongs to the peroxidase family. Peroxidase/catalase subfamily. As to quaternary structure, homodimer or homotetramer. Heme b serves as cofactor. Formation of the three residue Trp-Tyr-Met cross-link is important for the catalase, but not the peroxidase activity of the enzyme.

The catalysed reaction is H2O2 + AH2 = A + 2 H2O. It carries out the reaction 2 H2O2 = O2 + 2 H2O. Bifunctional enzyme with both catalase and broad-spectrum peroxidase activity. This chain is Catalase-peroxidase 1, found in Burkholderia cenocepacia (strain ATCC BAA-245 / DSM 16553 / LMG 16656 / NCTC 13227 / J2315 / CF5610) (Burkholderia cepacia (strain J2315)).